The following is a 379-amino-acid chain: MELVEVLEGKAKILTPKAESIYDAPVFYNPRMALNRDIAVVLLNVLKPRIVLDALSATGIRGIRFALETPAEEIWMNDISEDAYNLMKKNVLLNFKGELEESNGRAVLKSEKTLVVNHDDANRLMAEKHRYFHFIDLDPFGSPMEFLDTALRSVKRKGILGITATDGAPLCGAHPKACMRKYLAVPLRGELCHEVGTRILVGVVARYAAKYDLGIEVILAYYKDHYFRAFIKLKDGARKGDESLENLGYIYFDESTGKFEVERSFLPSKPNAYGPVWLGPLKSQEIVEEMLEISQQLSLARKKQAVKLLKILKDELDVPLFYDTHGLGRRLKIEARKIEEIINELRSLGYRASRTHFSPTGVKTDAPYEVFVNVLSSAK.

One can recognise a Trm1 methyltransferase domain in the interval 4–375; sequence VEVLEGKAKI…APYEVFVNVL (372 aa). Positions 36, 61, 78, 120, and 121 each coordinate S-adenosyl-L-methionine.

Belongs to the class I-like SAM-binding methyltransferase superfamily. Trm1 family.

The enzyme catalyses guanosine(26) in tRNA + 2 S-adenosyl-L-methionine = N(2)-dimethylguanosine(26) in tRNA + 2 S-adenosyl-L-homocysteine + 2 H(+). In terms of biological role, dimethylates a single guanine residue at position 26 of a number of tRNAs using S-adenosyl-L-methionine as donor of the methyl groups. The polypeptide is tRNA (guanine(26)-N(2))-dimethyltransferase (Pyrococcus abyssi (strain GE5 / Orsay)).